Here is an 83-residue protein sequence, read N- to C-terminus: Parvalbumin beta 3 (83 aa).

EF-hand domains lie at 13-48 and 52-83; these read KSND…FSAG and LTAG…LVKA. Ca(2+) is bound by residues D26, D28, S30, F32, E34, E37, D65, D67, D69, M71, and E76.

This sequence belongs to the parvalbumin family.

Its function is as follows. In muscle, parvalbumin is thought to be involved in relaxation after contraction. It binds two calcium ions. This chain is Parvalbumin beta 3, found in Macruronus novaezelandiae (Blue grenadier).